The following is a 222-amino-acid chain: Putative O-methyltransferase MAV_1364 (222 aa).

S-adenosyl-L-methionine is bound by residues Val-49, Glu-71, 73–74 (GT), Ser-79, Asp-97, and Ile-98. Asp-145 is a substrate binding site. S-adenosyl-L-methionine is bound at residue Asp-147.

The protein belongs to the class I-like SAM-binding methyltransferase superfamily. Cation-dependent O-methyltransferase family.

This chain is Putative O-methyltransferase MAV_1364, found in Mycobacterium avium (strain 104).